The chain runs to 348 residues: Holliday junction branch migration complex subunit RuvB (348 aa).

Low complexity predominate over residues 1–10 (MAIVSSSSGR). Residues 1–37 (MAIVSSSSGRKPPRRPEALMDPQQAPEEVVSRPEDKL) form a disordered region. The interval 13 to 198 (PRRPEALMDP…FGLIQRLEFY (186 aa)) is large ATPase domain (RuvB-L). Leucine 37, arginine 38, glycine 79, lysine 82, threonine 83, threonine 84, arginine 188, tyrosine 198, and arginine 235 together coordinate ATP. Residue threonine 83 coordinates Mg(2+). Positions 199–271 (GQGDLEAIVE…LVGEALSLHR (73 aa)) are small ATPAse domain (RuvB-S). The head domain (RuvB-H) stretch occupies residues 274 to 348 (HRGLDASDRR…AARSHLAEAA (75 aa)). Residues arginine 329 and arginine 334 each coordinate DNA.

This sequence belongs to the RuvB family. Homohexamer. Forms an RuvA(8)-RuvB(12)-Holliday junction (HJ) complex. HJ DNA is sandwiched between 2 RuvA tetramers; dsDNA enters through RuvA and exits via RuvB. An RuvB hexamer assembles on each DNA strand where it exits the tetramer. Each RuvB hexamer is contacted by two RuvA subunits (via domain III) on 2 adjacent RuvB subunits; this complex drives branch migration. In the full resolvosome a probable DNA-RuvA(4)-RuvB(12)-RuvC(2) complex forms which resolves the HJ.

Its subcellular location is the cytoplasm. The catalysed reaction is ATP + H2O = ADP + phosphate + H(+). The RuvA-RuvB-RuvC complex processes Holliday junction (HJ) DNA during genetic recombination and DNA repair, while the RuvA-RuvB complex plays an important role in the rescue of blocked DNA replication forks via replication fork reversal (RFR). RuvA specifically binds to HJ cruciform DNA, conferring on it an open structure. The RuvB hexamer acts as an ATP-dependent pump, pulling dsDNA into and through the RuvAB complex. RuvB forms 2 homohexamers on either side of HJ DNA bound by 1 or 2 RuvA tetramers; 4 subunits per hexamer contact DNA at a time. Coordinated motions by a converter formed by DNA-disengaged RuvB subunits stimulates ATP hydrolysis and nucleotide exchange. Immobilization of the converter enables RuvB to convert the ATP-contained energy into a lever motion, pulling 2 nucleotides of DNA out of the RuvA tetramer per ATP hydrolyzed, thus driving DNA branch migration. The RuvB motors rotate together with the DNA substrate, which together with the progressing nucleotide cycle form the mechanistic basis for DNA recombination by continuous HJ branch migration. Branch migration allows RuvC to scan DNA until it finds its consensus sequence, where it cleaves and resolves cruciform DNA. This Synechococcus sp. (strain CC9605) protein is Holliday junction branch migration complex subunit RuvB.